A 427-amino-acid polypeptide reads, in one-letter code: Probable anaerobic glycerol-3-phosphate dehydrogenase subunit B (427 aa).

The protein belongs to the anaerobic G-3-P dehydrogenase subunit B family. FMN is required as a cofactor.

The enzyme catalyses a quinone + sn-glycerol 3-phosphate = dihydroxyacetone phosphate + a quinol. The protein operates within polyol metabolism; glycerol degradation via glycerol kinase pathway; glycerone phosphate from sn-glycerol 3-phosphate (anaerobic route): step 1/1. The protein is Probable anaerobic glycerol-3-phosphate dehydrogenase subunit B of Halobacterium salinarum (strain ATCC 29341 / DSM 671 / R1).